A 222-amino-acid polypeptide reads, in one-letter code: Ribosomal RNA small subunit methyltransferase G (222 aa).

S-adenosyl-L-methionine is bound by residues G84, F89, 141-142 (VE), and R154.

This sequence belongs to the methyltransferase superfamily. RNA methyltransferase RsmG family.

It is found in the cytoplasm. It catalyses the reaction guanosine(527) in 16S rRNA + S-adenosyl-L-methionine = N(7)-methylguanosine(527) in 16S rRNA + S-adenosyl-L-homocysteine. In terms of biological role, specifically methylates the N7 position of guanine in position 527 of 16S rRNA. The protein is Ribosomal RNA small subunit methyltransferase G of Bradyrhizobium sp. (strain BTAi1 / ATCC BAA-1182).